A 302-amino-acid polypeptide reads, in one-letter code: MQQLLNEILDEVRPLIGRGKVADYIPALAGVEPDQLGIAVYSRDGELFHAGDALRPFSIQSISKVFSLVQAIQHSGEDIWQRLGHEPSGQPFNSLVQLEFERGRPRNPFINAGALVICDINQSRFAAPAQSMRDFVRRLCGNPEVVSDSVVARSEYQHRSRNAAAAYLMKSFGNFHNDVEAVLLSYFHHCALRMSCVDLARAFCFLADKGFCKHSGEQVLNERQTKQVNAIMATSGLYDEAGNFAYRVGLPGKSGVGGGIIAVVPGRFTVCVWSPELNGAGNSLAGIAALEKLSERIGWSIF.

Residues Ser61, Asn111, Glu155, Asn162, Tyr186, Tyr238, and Val256 each coordinate substrate.

It belongs to the glutaminase family. Homotetramer.

It carries out the reaction L-glutamine + H2O = L-glutamate + NH4(+). The chain is Glutaminase from Pseudomonas paraeruginosa (strain DSM 24068 / PA7) (Pseudomonas aeruginosa (strain PA7)).